A 796-amino-acid chain; its full sequence is Putative aconitate hydratase, mitochondrial (796 aa).

The N-terminal 28 residues, 1 to 28 (MLRQIVSQRSAARRQLIDQLAPCLRRGL), are a transit peptide targeting the mitochondrion. Residues Gln108 and 201–203 (DSH) each bind substrate. [4Fe-4S] cluster-binding residues include Cys399, Cys462, and Cys465. Residues Arg489 and Arg494 each contribute to the substrate site. Residues 540 to 569 (EPPTGQDLPSKGFEAGNPAFQPSAPVPDSS) are disordered. 685-686 (AR) lines the substrate pocket.

The protein belongs to the aconitase/IPM isomerase family.

Its subcellular location is the mitochondrion. Has no detectable activity towards cis-acontiate or cis-homoaconitate. The sequence is that of Putative aconitate hydratase, mitochondrial (acoB) from Emericella nidulans (strain FGSC A4 / ATCC 38163 / CBS 112.46 / NRRL 194 / M139) (Aspergillus nidulans).